The primary structure comprises 652 residues: Nitrate reductase-like protein NarX (652 aa).

The segment at 1–251 (MTVTPRTGSR…FGDQTDVPES (251 aa)) is nitrate reductase alpha subunit. Residues 53-117 (DKVVRSTHGV…AFSWYTYSPT (65 aa)) form the 4Fe-4S Mo/W bis-MGD-type domain. Residues His60, Cys64, Cys68, and Cys103 each contribute to the [4Fe-4S] cluster site. Asp233 is a binding site for Mo-bis(molybdopterin guanine dinucleotide). A nitrate reductase delta subunit region spans residues 258-415 (VWQCASVLLT…TVAAVCRTGD (158 aa)). A run of 5 helical transmembrane segments spans residues 416 to 436 (MMGELFWTVVPYVTMTIVAVG), 466 to 486 (PMFHFGILVVIVGHGIGLVIP), 504 to 524 (AVVLGSIAGITTLAGVTLLIY), 545 to 565 (LVLVAAIVAGLGATALGSGVV), and 595 to 615 (APLYYQIHVLIGLALFALWPF). A nitrate reductase gamma subunit region spans residues 416–652 (MMGELFWTVV…VLTRPRRRGW (237 aa)). Heme b-binding residues include His469 and His479. Positions 602 and 620 each coordinate heme b.

The protein in the N-terminal section; belongs to the nitrate reductase alpha subunit family. In the central section; belongs to the NarJ/NarW family. This sequence in the C-terminal section; belongs to the nitrate reductase gamma subunit family. It depends on [4Fe-4S] cluster as a cofactor. Requires Mo-bis(molybdopterin guanine dinucleotide) as cofactor. The cofactor is heme b.

The protein localises to the cell membrane. In terms of biological role, does not seem to have nitrate reductase activity. In Mycobacterium tuberculosis (strain CDC 1551 / Oshkosh), this protein is Nitrate reductase-like protein NarX (narX).